The following is a 41-amino-acid chain: Pi-stichotoxin-Hmg5c (41 aa).

3 disulfide bridges follow: cysteine 4–cysteine 37, cysteine 6–cysteine 30, and cysteine 20–cysteine 38.

The protein belongs to the sea anemone type 3 (BDS) potassium channel toxin family.

Its subcellular location is the secreted. It is found in the nematocyst. Functionally, toxin with different activities on acid-sensing ion channels (ASIC) and nicotinic acetylcholine receptors. Is able to bind T.californica muscle-type nicotinic acetylcholine receptors (nAChR) (alpha-1-beta-1-delta-epsilon (CHRNA1-CHRNB1-CHRND-CHRNE)), and human alpha-7/CHRNA7 nicotinic acetylcholine receptors. Weakly and reversibly inhibits rat homomeric ASIC1 (isoform ASIC1a) (IC(50)=1.25 uM), while it potentiates rat homomeric ASIC3 (EC(50)=1.53 uM). Rat ASIC1a current inhibition is not complete, and reaches a maximum of 86% inhibition. On rat ASIC3, does not activate the channel itself, but produces a remarkable potentiation of the transient current resulting from the acidic pulse. At the maximal applied concentration, elicits responses that are twice as high as those produced by extracellular protons. Surprisingly, shows a different activity on human ASIC3. On the truncated human ASIC3 (ASIC3-D20), the toxin weakly inhibits the channel. Molecular modeling interaction with rat ASIC1a suggests that it hinders the collapse of acidic pockets and stabilizes nonconducting channels state. In vivo, causes an anxiolytic effect on mouse behavior. Also shows an analgesic activity in an acid-induced muscle pain model, and important anti-inflammatory effect in models of acute local inflammation. The protein is Pi-stichotoxin-Hmg5c of Heteractis magnifica (Magnificent sea anemone).